Here is a 707-residue protein sequence, read N- to C-terminus: Polyribonucleotide nucleotidyltransferase (707 aa).

Residues aspartate 488 and aspartate 494 each contribute to the Mg(2+) site. The KH domain occupies 554 to 613; the sequence is PRLFTMKINQDKIREVIGKGGETIRSITAETGTEINIAEDGTITIAATTQEAGDAAKKRI. An S1 motif domain is found at 623-693; that stretch reads GKVYEGTVVK…DRGRVRLSIK (71 aa).

This sequence belongs to the polyribonucleotide nucleotidyltransferase family. Mg(2+) is required as a cofactor.

The protein resides in the cytoplasm. The enzyme catalyses RNA(n+1) + phosphate = RNA(n) + a ribonucleoside 5'-diphosphate. In terms of biological role, involved in mRNA degradation. Catalyzes the phosphorolysis of single-stranded polyribonucleotides processively in the 3'- to 5'-direction. The polypeptide is Polyribonucleotide nucleotidyltransferase (Neisseria meningitidis serogroup B (strain ATCC BAA-335 / MC58)).